The chain runs to 259 residues: Ras-related protein Rab-34 (259 aa).

At Met1 the chain carries N-acetylmethionine. GTP contacts are provided by Ser62, Val63, Gly64, Lys65, Thr66, Asp78, Tyr81, and Thr84. Thr66 provides a ligand contact to Mg(2+). Positions 71–89 (RFCKDTFDKNYKATIGVDF) match the Switch 1 motif. Positions 84 and 107 each coordinate Mg(2+). The Switch 2 signature appears at 108–127 (TAGQERFKCIASTYYRGAQA). GTP contacts are provided by Gly110, Lys167, Asp169, and Ser198. Phosphoserine is present on residues Ser241 and Ser244. Residues Cys257 and Cys258 are each lipidated (S-geranylgeranyl cysteine).

The protein belongs to the small GTPase superfamily. Rab family. In terms of assembly, interacts with RILP. The GTP-bound form interacts with REP15. Mg(2+) serves as cofactor.

It is found in the cytoplasm. It localises to the golgi apparatus. Its subcellular location is the cytoplasmic vesicle. The protein resides in the phagosome. The protein localises to the phagosome membrane. It is found in the cell projection. It localises to the cilium. Its subcellular location is the cytoskeleton. The protein resides in the microtubule organizing center. The protein localises to the centrosome. It is found in the centriole. The enzyme catalyses GTP + H2O = GDP + phosphate + H(+). With respect to regulation, regulated by guanine nucleotide exchange factors (GEFs) which promote the exchange of bound GDP for free GTP. Regulated by GTPase activating proteins (GAPs) which increase the GTP hydrolysis activity. Inhibited by GDP dissociation inhibitors (GDIs). Functionally, the small GTPases Rab are key regulators of intracellular membrane trafficking, from the formation of transport vesicles to their fusion with membranes. Rabs cycle between an inactive GDP-bound form and an active GTP-bound form that is able to recruit to membranes different sets of downstream effectors directly responsible for vesicle formation, movement, tethering and fusion. RAB34 transports protein involved in the redistribution of lysosomes to the peri-Golgi region. Plays a role in the maturation of phagosomes that engulf pathogens, such as S.aureus and M.tuberculosis. Plays a role in the fusion of phagosomes with lysosomes. Involved in ciliogenesis. In particular, it is required for early steps of the intracellular cilium assembly pathway initiated by trafficking and docking of ciliary vesicles to the centrioles in the cytoplasm, followed by axoneme formation in the cytoplasm. After axoneme elongation, the centrioles migrate close to the cell surface so that ciliary vesicles can fuse with the plasma membrane to expose cilia to the extracellular space. It seems dispensable for ciliogenesis via the extracellular pathway where cilium assembly begins after migration and docking of the centriole to the plasma membrane. Also acts as a positive regulator of hedgehog signaling and regulates ciliary function. The protein is Ras-related protein Rab-34 of Homo sapiens (Human).